Consider the following 130-residue polypeptide: Small ribosomal subunit protein bS16 (130 aa).

The disordered stretch occupies residues 82 to 130; it reads VLPKTERNNPKKAVPGKKAQDRAEEKAAKAAEASEAPADEAPAEEAAAE. Residues 99 to 110 are compositionally biased toward basic and acidic residues; that stretch reads KAQDRAEEKAAK. Residues 118–130 show a composition bias toward acidic residues; sequence PADEAPAEEAAAE.

The protein belongs to the bacterial ribosomal protein bS16 family.

This Dinoroseobacter shibae (strain DSM 16493 / NCIMB 14021 / DFL 12) protein is Small ribosomal subunit protein bS16.